The primary structure comprises 118 residues: MKNRYIQQFEDAQLKDKVMPQFKAGDTLRLGITIKEGEKTRTQYFEGVCIAIRGNGVDKTFRVRKMGANNIGVEKIFPFYSESLASVEVLRVGRVRRAKLYYLRDRRGKAARIKEIRH.

Belongs to the bacterial ribosomal protein bL19 family.

Its function is as follows. This protein is located at the 30S-50S ribosomal subunit interface and may play a role in the structure and function of the aminoacyl-tRNA binding site. The chain is Large ribosomal subunit protein bL19 from Helicobacter acinonychis (strain Sheeba).